A 399-amino-acid polypeptide reads, in one-letter code: 26S proteasome regulatory subunit 10B homolog A (399 aa).

Thr2 carries the post-translational modification N-acetylthreonine. Residue 180–187 (GPPGTGKT) coordinates ATP. Lys203 participates in a covalent cross-link: Glycyl lysine isopeptide (Lys-Gly) (interchain with G-Cter in ubiquitin).

This sequence belongs to the AAA ATPase family. Component of the 19S regulatory particle (RP/PA700) base subcomplex of the 26S proteasome. The 26S proteasome is composed of a core protease (CP), known as the 20S proteasome, capped at one or both ends by the 19S regulatory particle (RP/PA700). The RP/PA700 complex is composed of at least 17 different subunits in two subcomplexes, the base and the lid, which form the portions proximal and distal to the 20S proteolytic core, respectively.

It is found in the cytoplasm. Its subcellular location is the nucleus. Functionally, the 26S proteasome is involved in the ATP-dependent degradation of ubiquitinated proteins. The regulatory (or ATPase) complex confers ATP dependency and substrate specificity to the 26S complex. The polypeptide is 26S proteasome regulatory subunit 10B homolog A (RPT4A) (Arabidopsis thaliana (Mouse-ear cress)).